The primary structure comprises 131 residues: CLAVATA3/ESR (CLE)-related protein ESR1 (131 aa).

A signal peptide spans 1–26; it reads MASRMGMVAIVSLFVCALAASTSVNA. Residues 49–131 are disordered; it reads RQQQQGGFIG…IGPPPLSDRY (83 aa). 2 positions are modified to hydroxyproline: proline 81 and proline 84. Proline 84 is a glycosylation site (O-linked (Ara...) hydroxyproline).

This sequence belongs to the CLV3/ESR signal peptide family. Post-translationally, the O-glycosylation (arabinosylation) of the hydroxyproline Pro-84 enhances binding affinity of the ESR1p peptide for its receptor. Seed endosperm.

The protein localises to the secreted. It is found in the extracellular space. In terms of biological role, extracellular signal peptide that regulates cell fate. The protein is CLAVATA3/ESR (CLE)-related protein ESR1 of Zea mays (Maize).